Consider the following 921-residue polypeptide: Isoleucine--tRNA ligase 1 (921 aa).

The 'HIGH' region motif lies at 57-67; that stretch reads PYANGDIHMGH. Residue Glu552 participates in L-isoleucyl-5'-AMP binding. The short motif at 593-597 is the 'KMSKS' region element; the sequence is KMSKS. Lys596 lines the ATP pocket. Zn(2+) contacts are provided by Cys888, Cys891, Cys908, and Cys911.

This sequence belongs to the class-I aminoacyl-tRNA synthetase family. IleS type 1 subfamily. In terms of assembly, monomer. Zn(2+) is required as a cofactor.

The protein resides in the cytoplasm. The catalysed reaction is tRNA(Ile) + L-isoleucine + ATP = L-isoleucyl-tRNA(Ile) + AMP + diphosphate. Its function is as follows. Catalyzes the attachment of isoleucine to tRNA(Ile). As IleRS can inadvertently accommodate and process structurally similar amino acids such as valine, to avoid such errors it has two additional distinct tRNA(Ile)-dependent editing activities. One activity is designated as 'pretransfer' editing and involves the hydrolysis of activated Val-AMP. The other activity is designated 'posttransfer' editing and involves deacylation of mischarged Val-tRNA(Ile). The polypeptide is Isoleucine--tRNA ligase 1 (Bacillus cereus (strain ZK / E33L)).